A 141-amino-acid polypeptide reads, in one-letter code: Large ribosomal subunit protein uL14 (141 aa).

It belongs to the universal ribosomal protein uL14 family. As to quaternary structure, part of the 50S ribosomal subunit. Forms a cluster with proteins L3 and L24e, part of which may contact the 16S rRNA in 2 intersubunit bridges.

Functionally, binds to 23S rRNA. Forms part of two intersubunit bridges in the 70S ribosome. This chain is Large ribosomal subunit protein uL14, found in Pyrococcus abyssi (strain GE5 / Orsay).